Consider the following 212-residue polypeptide: 3-isopropylmalate dehydratase small subunit (212 aa).

This sequence belongs to the LeuD family. LeuD type 1 subfamily. In terms of assembly, heterodimer of LeuC and LeuD.

The catalysed reaction is (2R,3S)-3-isopropylmalate = (2S)-2-isopropylmalate. The protein operates within amino-acid biosynthesis; L-leucine biosynthesis; L-leucine from 3-methyl-2-oxobutanoate: step 2/4. In terms of biological role, catalyzes the isomerization between 2-isopropylmalate and 3-isopropylmalate, via the formation of 2-isopropylmaleate. The sequence is that of 3-isopropylmalate dehydratase small subunit from Beutenbergia cavernae (strain ATCC BAA-8 / DSM 12333 / CCUG 43141 / JCM 11478 / NBRC 16432 / NCIMB 13614 / HKI 0122).